A 266-amino-acid chain; its full sequence is 22 kDa alpha-zein 8 (266 aa).

The signal sequence occupies residues 1–21 (MATKILALLALLALFVSATNA).

Belongs to the zein family.

Functionally, zeins are major seed storage proteins. In Zea mays (Maize), this protein is 22 kDa alpha-zein 8.